The following is a 1649-amino-acid chain: MAGGRGAPGRGRDEPPESYPQRQDHELQALEAIYGADFQDLRPDACGPVKEPPEINLVLYPQGLTGEEVYVKVDLRVKCPPTYPDVVPEIELKNAKGLSNESVNLLKSRLEELAKKHCGEVMIFELAYHVQSFLSEHNKPPPKSFHEEMLERRAQEEQQRLLEAKRKEEQEQREILHEIQRRKEEIKEEKKRKEMAKQERLEIASLSNQDHTSKKDPGGHRTAAILHGGSPDFVGNGKHRANSSGRSRRERQYSVCNSEDSPGSCEILYFNMGSPDQLMVHKGKCIGSDEQLGKLVYNALETATGGFVLLYEWVLQWQKKMGPFLTSQEKEKIDKCKKQIQGTETEFNSLVKLSHPNVVRYLAMNLKEQDDSIVVDILVEHISGVSLAAHLSHSGPIPVHQLRRYTAQLLSGLDYLHSNSVVHKVLSASNVLVDAEGTVKITDYSISKRLADICKEDVFEQTRVRFSDNALPYKTGKKGDVWRLGLLLLSLSQGQECGEYPVTIPSDLPADFQDFLKKCVCLDDKERWSPQQLLKHSFINPQPKMPLVEQSPEDSEGQDYVETVIPSNRLPSAAFFSETQRQFSRYFIEFEELQLLGKGAFGAVIKVQNKLDGCCYAVKRIPINPASRQFRRIKGEVTLLSRLHHENIVRYYNAWIERHERPAGPGTPPPDSGPLAKDDRAARGQPASDTDGLDSVEAAAPPPILSSSVEWSTSGERSASARFPATGPGSSDDEDDDEDEHGGVFSQSFLPASDSESDIIFDNEDENSKSQNQDEDCNEKNGCHESEPSVTTEAVHYLYIQMEYCEKSTLRDTIDQGLYRDTVRLWRLFREILDGLAYIHEKGMIHRDLKPVNIFLDSDDHVKIGDFGLATDHLAFSADSKQDDQTGDLIKSDPSGHLTGMVGTALYVSPEVQGSTKSAYNQKVDLFSLGIIFFEMSYHPMVTASERIFVLNQLRDPTSPKFPEDFDDGEHAKQKSVISWLLNHDPAKRPTATELLKSELLPPPQMEESELHEVLHHTLTNVDGKAYRTMMAQIFSQRISPAIDYTYDSDILKGNFSIRTAKMQQHVCETIIRIFKRHGAVQLCTPLLLPRNRQIYEHNEAALFMDHSGMLVMLPFDLRIPFARYVARNNILNLKRYCIERVFRPRKLDRFHPKELLECAFDIVTSTTNSFLPTAEIIYTIYEIIQEFPALQERNYSIYLNHTMLLKAILLHCGIPEDKLSQVYIILYDAVTEKLTRREVEAKFCNLSLSSNSLCRLYKFIEQKGDLQDLMPTINSLIKQKTGIAQLVKYGLKDLEEVVGLLKKLGIKLQVLINLGLVYKVQQHNGIIFQFVAFIKRRQRAVPEILAAGGRYDLLIPQFRGPQALGPVPTAIGVSIAIDKISAAVLNMEESVTISSCDLLVVSVGQMSMSRAINLTQKLWTAGITAEIMYDWSQSQEELQEYCRHHEITYVALVSDKEGSHVKVKSFEKERQTEKRVLETELVDHVLQKLRTKVTDERNGREASDNLAVQNLKGSFSNASGLFEIHGATVVPIVSVLAPEKLSASTRRRYETQVQTRLQTSLANLHQKSSEIEILAVDLPKETILQFLSLEWDADEQAFNTTVKQLLSRLPKQRYLKLVCDEIYNIKVEKKVSVLFLYSYRDDYYRILF.

3 disordered regions span residues 1-25 (MAGG…RQDH), 138-158 (NKPP…QEEQ), and 227-256 (HGGS…YSVC). Positions 25-137 (HELQALEAIY…YHVQSFLSEH (113 aa)) constitute an RWD domain. Residues 146-205 (HEEMLERRAQEEQQRLLEAKRKEEQEQREILHEIQRRKEEIKEEKKRKEMAKQERLEIAS) adopt a coiled-coil conformation. A Phosphoserine modification is found at serine 230. A compositionally biased stretch (basic residues) spans 237 to 249 (GKHRANSSGRSRR). Protein kinase domains lie at 296-539 (VYNA…HSFI) and 590-1001 (FEEL…SELL). Residues 596–604 (LGKGAFGAV) and lysine 619 contribute to the ATP site. Disordered stretches follow at residues 660–750 (ERPA…QSFL) and 766–788 (ENSK…ESEP). Threonine 667 carries the phosphothreonine modification. Residues 705-717 (LSSSVEWSTSGER) show a composition bias toward polar residues. Acidic residues predominate over residues 731–740 (SDDEDDDEDE). Over residues 778-787 (NEKNGCHESE) the composition is skewed to basic and acidic residues. Aspartate 848 acts as the Proton acceptor in catalysis. At threonine 871 the chain carries Phosphothreonine. Phosphothreonine; by autocatalysis is present on residues threonine 899 and threonine 904. Residues 1022–1493 (VDGKAYRTMM…DHVLQKLRTK (472 aa)) form a histidyl-tRNA synthetase-like region. Lysine 1259 carries the post-translational modification N6-acetyllysine.

This sequence belongs to the protein kinase superfamily. Ser/Thr protein kinase family. GCN2 subfamily. Homodimer; homodimerization is important for kinase activation by uncharged tRNAs. Interacts with GCN1; this interaction stimulates EIF2AK4/GCN2 kinase activity and is impaired by IMPACT upon a variety of stress conditions, such as amino acid depletion, UV-C irradiation, proteasome inhibitor treatment and glucose deprivation. Interacts with DNAJC3; this interaction inhibits EIF2AK4/GCN2 kinase activity during endoplasmic reticulum (ER), hypothermic and amino acid-starving stress conditions. Interacts with MAP3K20; activates EIF2AK4/GCN2 kinase activity in response to moderate ribotoxic stress. As to quaternary structure, (Microbial infection) Interacts with hepatitis E virus (HEV) ORF1 protease; this interaction inhibits dimerization of EIF2AK4 and prevents EIF2AK4-mediated phosphorylation of EIF2A. In terms of processing, autophosphorylated; autophosphorylation on Thr-899 is increased upon amino acid starvation and in UV irradiation cells and inhibited in presence of IMPACT. Widely expressed. Expressed in lung, smooth muscle cells and macrophages.

It localises to the cytoplasm. It catalyses the reaction L-seryl-[protein] + ATP = O-phospho-L-seryl-[protein] + ADP + H(+). The catalysed reaction is L-threonyl-[protein] + ATP = O-phospho-L-threonyl-[protein] + ADP + H(+). Its function is as follows. Metabolic-stress sensing protein kinase that phosphorylates the alpha subunit of eukaryotic translation initiation factor 2 (EIF2S1/eIF-2-alpha) in response to low amino acid availability. Plays a role as an activator of the integrated stress response (ISR) required for adaptation to amino acid starvation. EIF2S1/eIF-2-alpha phosphorylation in response to stress converts EIF2S1/eIF-2-alpha into a global protein synthesis inhibitor, leading to a global attenuation of cap-dependent translation, and thus to a reduced overall utilization of amino acids, while concomitantly initiating the preferential translation of ISR-specific mRNAs, such as the transcriptional activator ATF4, and hence allowing ATF4-mediated reprogramming of amino acid biosynthetic gene expression to alleviate nutrient depletion. Binds uncharged tRNAs. Required for the translational induction of protein kinase PRKCH following amino acid starvation. Involved in cell cycle arrest by promoting cyclin D1 mRNA translation repression after the unfolded protein response pathway (UPR) activation or cell cycle inhibitor CDKN1A/p21 mRNA translation activation in response to amino acid deprivation. Plays a role in the consolidation of synaptic plasticity, learning as well as formation of long-term memory. Plays a role in neurite outgrowth inhibition. Plays a proapoptotic role in response to glucose deprivation. Promotes global cellular protein synthesis repression in response to UV irradiation independently of the stress-activated protein kinase/c-Jun N-terminal kinase (SAPK/JNK) and p38 MAPK signaling pathways. Plays a role in the antiviral response against alphavirus infection; impairs early viral mRNA translation of the incoming genomic virus RNA, thus preventing alphavirus replication. (Microbial infection) Plays a role in modulating the adaptive immune response to yellow fever virus infection; promotes dendritic cells to initiate autophagy and antigene presentation to both CD4(+) and CD8(+) T-cells under amino acid starvation. The protein is eIF-2-alpha kinase GCN2 of Homo sapiens (Human).